Reading from the N-terminus, the 324-residue chain is Ferrochelatase (324 aa).

Fe cation-binding residues include histidine 197 and glutamate 278.

It belongs to the ferrochelatase family.

The protein resides in the cytoplasm. The enzyme catalyses heme b + 2 H(+) = protoporphyrin IX + Fe(2+). It participates in porphyrin-containing compound metabolism; protoheme biosynthesis; protoheme from protoporphyrin-IX: step 1/1. In terms of biological role, catalyzes the ferrous insertion into protoporphyrin IX. In Aeromonas hydrophila subsp. hydrophila (strain ATCC 7966 / DSM 30187 / BCRC 13018 / CCUG 14551 / JCM 1027 / KCTC 2358 / NCIMB 9240 / NCTC 8049), this protein is Ferrochelatase.